A 156-amino-acid polypeptide reads, in one-letter code: Putative pre-16S rRNA nuclease (156 aa).

Belongs to the YqgF nuclease family.

The protein localises to the cytoplasm. In terms of biological role, could be a nuclease involved in processing of the 5'-end of pre-16S rRNA. The protein is Putative pre-16S rRNA nuclease of Nocardioides sp. (strain ATCC BAA-499 / JS614).